Here is a 165-residue protein sequence, read N- to C-terminus: Coatomer subunit zeta (165 aa).

The protein belongs to the adaptor complexes small subunit family. Oligomeric complex that consists of at least the alpha, beta, beta', gamma, delta, epsilon and zeta subunits.

It localises to the cytoplasm. It is found in the golgi apparatus membrane. Its subcellular location is the cytoplasmic vesicle. The protein resides in the COPI-coated vesicle membrane. The coatomer is a cytosolic protein complex that binds to dilysine motifs and reversibly associates with Golgi non-clathrin-coated vesicles, which further mediate biosynthetic protein transport from the ER, via the Golgi up to the trans Golgi network. Coatomer complex is required for budding from Golgi membranes, and is essential for the retrograde Golgi-to-ER transport of dilysine-tagged proteins. The zeta subunit may be involved in regulating the coat assembly and, hence, the rate of biosynthetic protein transport due to its association-dissociation properties with the coatomer complex. The chain is Coatomer subunit zeta from Encephalitozoon cuniculi (strain GB-M1) (Microsporidian parasite).